Consider the following 266-residue polypeptide: Glucosamine-6-phosphate deaminase (266 aa).

Catalysis depends on Asp72, which acts as the Proton acceptor; for enolization step. The active-site For ring-opening step is Asp141. Catalysis depends on His143, which acts as the Proton acceptor; for ring-opening step. Glu148 functions as the For ring-opening step in the catalytic mechanism.

Belongs to the glucosamine/galactosamine-6-phosphate isomerase family. NagB subfamily. As to quaternary structure, homohexamer.

The catalysed reaction is alpha-D-glucosamine 6-phosphate + H2O = beta-D-fructose 6-phosphate + NH4(+). It participates in amino-sugar metabolism; N-acetylneuraminate degradation; D-fructose 6-phosphate from N-acetylneuraminate: step 5/5. With respect to regulation, allosterically activated by N-acetylglucosamine 6-phosphate (GlcNAc6P). Functionally, catalyzes the reversible isomerization-deamination of glucosamine 6-phosphate (GlcN6P) to form fructose 6-phosphate (Fru6P) and ammonium ion. In Aeromonas salmonicida (strain A449), this protein is Glucosamine-6-phosphate deaminase.